The following is a 2771-amino-acid chain: Kinesin-like protein KIN-12D (2771 aa).

Composition is skewed to basic and acidic residues over residues 1–13 (MSKE…RDSD) and 40–54 (KNPK…DRTP). 2 disordered regions span residues 1-73 (MSKE…TPDK) and 117-139 (YSET…GSCY). Positions 118–131 (SETNSTQNTPTKSV) are enriched in polar residues. Positions 193–530 (NVQILIRVRP…LKFAQRAKLI (338 aa)) constitute a Kinesin motor domain. 274–281 (GQTGSGKT) contacts ATP. Microtubules-binding stretches follow at residues 400–404 (SSRSH), 431–437 (VDLAGSE), and 479–483 (HIPYR). Coiled-coil stretches lie at residues 1033 to 1110 (AATA…NEME), 1267 to 1331 (ELKQ…MKEK), 1410 to 1505 (IILL…YVEN), 2108 to 2390 (ELED…EQVK), and 2512 to 2677 (RERD…LAQE). A compositionally biased stretch (basic residues) spans 2727 to 2736 (LKGKAKSRRS). The interval 2727-2771 (LKGKAKSRRSRNPERKMPSMPSPRRSWSQSPRSMSQVPFFSSLDR) is disordered. The segment covering 2744–2762 (PSMPSPRRSWSQSPRSMSQ) has biased composition (low complexity).

This sequence belongs to the TRAFAC class myosin-kinesin ATPase superfamily. Kinesin family. KIN-12 subfamily. Expressed in tissues enriched in dividing cells, such as root meristems, root primordia, and leaf primordia/young leaves.

The protein resides in the cytoplasm. It localises to the cytoskeleton. Its subcellular location is the phragmoplast. Functionally, involved in the spatial control of cytokinesis by a proper phragmoplast guidance. The protein is Kinesin-like protein KIN-12D of Arabidopsis thaliana (Mouse-ear cress).